We begin with the raw amino-acid sequence, 351 residues long: Small ribosomal subunit biogenesis GTPase RsgA (351 aa).

The span at 1-12 shows a compositional bias: basic residues; it reads MAKHKLSKGQQR. The disordered stretch occupies residues 1–37; the sequence is MAKHKLSKGQQRRVRENHQRRLKKQDNKPEMDDNQLG. Residues 13–31 show a composition bias toward basic and acidic residues; it reads RVRENHQRRLKKQDNKPEM. Residues 112–274 enclose the CP-type G domain; that stretch reads YYDGIKPIAA…VIDSPGVREF (163 aa). Residues 160–163 and 214–222 contribute to the GTP site; these read NKID and GQSGVGKSS. The Zn(2+) site is built by Cys298, Cys303, His305, and Cys311.

It belongs to the TRAFAC class YlqF/YawG GTPase family. RsgA subfamily. In terms of assembly, monomer. Associates with 30S ribosomal subunit, binds 16S rRNA. Requires Zn(2+) as cofactor.

Its subcellular location is the cytoplasm. Functionally, one of several proteins that assist in the late maturation steps of the functional core of the 30S ribosomal subunit. Helps release RbfA from mature subunits. May play a role in the assembly of ribosomal proteins into the subunit. Circularly permuted GTPase that catalyzes slow GTP hydrolysis, GTPase activity is stimulated by the 30S ribosomal subunit. This Photorhabdus laumondii subsp. laumondii (strain DSM 15139 / CIP 105565 / TT01) (Photorhabdus luminescens subsp. laumondii) protein is Small ribosomal subunit biogenesis GTPase RsgA.